The sequence spans 620 residues: Cilia- and flagella-associated protein 52 (620 aa).

11 WD repeats span residues 62–106 (GHGN…LIAR), 109–150 (LHKG…AICG), 156–195 (LNVGNATSVVFSRCRDEMFVTAGNGTIRVWELDLPNRKIW), 288–327 (QLQGGITSITLRGEGHQFFVGTEESHIYRVNFTDFKETLI), 330–369 (CHFEAVQDIVFPFGTAELFATCAKKDIRVWHTMSKRELLR), 372–411 (VPNMTCHGIDFMRDGKSIISAWDDGKIRAFAPESGRLMYT), 415–454 (AHRIGVTAIATTSDCKRIISGGGEGEVRVWQVGCQTQKLE), 459–498 (EHKSSVSCIRVKKNNEECVTASTDGTCIIWDLVRLRRNQM), 500–541 (LANT…RELE), 543–582 (SLSGSINGMDITQEGGHFVTGGHDHLVKVWDYNEGEVTHV), and 585–620 (GHSGNIMAMRISPGNQYIVSVSADGAILRWKYPFAS).

It belongs to the CFAP52 family. Microtubule inner protein component of sperm flagellar doublet microtubules. Interacts with BRCA2. Interacts with the CCT chaperonin complex. Interacts with HSP70. Interacts with AK8. Interacts with CFAP45. Interacts with DNAI1. Interacts with IQDC.

Its subcellular location is the cytoplasm. The protein resides in the cytoskeleton. It is found in the cilium axoneme. The protein localises to the flagellum axoneme. Its function is as follows. Microtubule inner protein (MIP) part of the dynein-decorated doublet microtubules (DMTs) in cilia axoneme. Important for proper ciliary and flagellar beating. May act in cooperation with CFAP45 and axonemal dynein subunit DNAH11. May play a role in cell growth and/or survival. The sequence is that of Cilia- and flagella-associated protein 52 from Mus musculus (Mouse).